Consider the following 137-residue polypeptide: Large ribosomal subunit protein uL16 (137 aa).

Positions 1-22 are disordered; that stretch reads MLQPKRTKFRKQQKGRNRGLAH.

Belongs to the universal ribosomal protein uL16 family. In terms of assembly, part of the 50S ribosomal subunit.

Functionally, binds 23S rRNA and is also seen to make contacts with the A and possibly P site tRNAs. This chain is Large ribosomal subunit protein uL16, found in Saccharophagus degradans (strain 2-40 / ATCC 43961 / DSM 17024).